Consider the following 376-residue polypeptide: Alkanesulfonate monooxygenase (376 aa).

It belongs to the SsuD family.

It catalyses the reaction an alkanesulfonate + FMNH2 + O2 = an aldehyde + FMN + sulfite + H2O + 2 H(+). Its function is as follows. Catalyzes the desulfonation of aliphatic sulfonates. The chain is Alkanesulfonate monooxygenase from Bacillus licheniformis (strain ATCC 14580 / DSM 13 / JCM 2505 / CCUG 7422 / NBRC 12200 / NCIMB 9375 / NCTC 10341 / NRRL NRS-1264 / Gibson 46).